A 278-amino-acid polypeptide reads, in one-letter code: 4-hydroxy-tetrahydrodipicolinate reductase (278 aa).

Residues 13–18 and 111–113 each bind NAD(+); these read GAAGKM and GTT. His167 functions as the Proton donor/acceptor in the catalytic mechanism. (S)-2,3,4,5-tetrahydrodipicolinate is bound at residue His168. Catalysis depends on Lys171, which acts as the Proton donor. Residue 177-178 participates in (S)-2,3,4,5-tetrahydrodipicolinate binding; sequence GT.

Belongs to the DapB family.

It localises to the cytoplasm. It catalyses the reaction (S)-2,3,4,5-tetrahydrodipicolinate + NAD(+) + H2O = (2S,4S)-4-hydroxy-2,3,4,5-tetrahydrodipicolinate + NADH + H(+). The enzyme catalyses (S)-2,3,4,5-tetrahydrodipicolinate + NADP(+) + H2O = (2S,4S)-4-hydroxy-2,3,4,5-tetrahydrodipicolinate + NADPH + H(+). Its pathway is amino-acid biosynthesis; L-lysine biosynthesis via DAP pathway; (S)-tetrahydrodipicolinate from L-aspartate: step 4/4. Catalyzes the conversion of 4-hydroxy-tetrahydrodipicolinate (HTPA) to tetrahydrodipicolinate. The sequence is that of 4-hydroxy-tetrahydrodipicolinate reductase from Trichormus variabilis (strain ATCC 29413 / PCC 7937) (Anabaena variabilis).